A 227-amino-acid chain; its full sequence is Phosphoglycolate phosphatase (227 aa).

Residue D9 is the Nucleophile of the active site. Residues D9, D11, and D171 each coordinate Mg(2+).

The protein belongs to the HAD-like hydrolase superfamily. CbbY/CbbZ/Gph/YieH family. Mg(2+) is required as a cofactor.

The enzyme catalyses 2-phosphoglycolate + H2O = glycolate + phosphate. It functions in the pathway organic acid metabolism; glycolate biosynthesis; glycolate from 2-phosphoglycolate: step 1/1. Functionally, specifically catalyzes the dephosphorylation of 2-phosphoglycolate. Is involved in the dissimilation of the intracellular 2-phosphoglycolate formed during the DNA repair of 3'-phosphoglycolate ends, a major class of DNA lesions induced by oxidative stress. This is Phosphoglycolate phosphatase from Mesorhizobium japonicum (strain LMG 29417 / CECT 9101 / MAFF 303099) (Mesorhizobium loti (strain MAFF 303099)).